The primary structure comprises 129 residues: Fluoride-specific ion channel FluC (129 aa).

4 helical membrane passes run 10–30, 35–55, 71–91, and 105–125; these read LLVG…ALAF, PGFP…IGFL, LFLV…MFEG, and LYLA…IIAA. Na(+)-binding residues include Gly79 and Thr82.

Belongs to the fluoride channel Fluc/FEX (TC 1.A.43) family.

The protein resides in the cell inner membrane. The catalysed reaction is fluoride(in) = fluoride(out). With respect to regulation, na(+) is not transported, but it plays an essential structural role and its presence is essential for fluoride channel function. Its function is as follows. Fluoride-specific ion channel. Important for reducing fluoride concentration in the cell, thus reducing its toxicity. In Chlorobium luteolum (strain DSM 273 / BCRC 81028 / 2530) (Pelodictyon luteolum), this protein is Fluoride-specific ion channel FluC.